The sequence spans 94 residues: ESAT-6-like protein EsxL (94 aa).

The protein belongs to the WXG100 family. ESAT-6 subfamily. As to quaternary structure, strongly interacts with EsxK to form a heterodimeric complex under reducing conditions.

Its subcellular location is the secreted. The chain is ESAT-6-like protein EsxL from Mycobacterium tuberculosis (strain CDC 1551 / Oshkosh).